The following is a 509-amino-acid chain: tRNA-2-methylthio-N(6)-dimethylallyladenosine synthase (509 aa).

A compositionally biased stretch (polar residues) spans 1-15; sequence MNEQQRLASQQANAS. Positions 1–22 are disordered; sequence MNEQQRLASQQANASTKKEEKD. Positions 66 to 184 constitute an MTTase N-terminal domain; that stretch reads RKFYIRTYGC…LPYILKDAMF (119 aa). 6 residues coordinate [4Fe-4S] cluster: C75, C111, C145, C221, C225, and C228. One can recognise a Radical SAM core domain in the interval 207 to 437; the sequence is RRGDIKAWVN…NELVNEFSAK (231 aa). The TRAM domain maps to 440–503; that stretch reads KKYEGQIVEV…TWSLNGELVE (64 aa).

Belongs to the methylthiotransferase family. MiaB subfamily. As to quaternary structure, monomer. [4Fe-4S] cluster is required as a cofactor.

It localises to the cytoplasm. It carries out the reaction N(6)-dimethylallyladenosine(37) in tRNA + (sulfur carrier)-SH + AH2 + 2 S-adenosyl-L-methionine = 2-methylsulfanyl-N(6)-dimethylallyladenosine(37) in tRNA + (sulfur carrier)-H + 5'-deoxyadenosine + L-methionine + A + S-adenosyl-L-homocysteine + 2 H(+). Its function is as follows. Catalyzes the methylthiolation of N6-(dimethylallyl)adenosine (i(6)A), leading to the formation of 2-methylthio-N6-(dimethylallyl)adenosine (ms(2)i(6)A) at position 37 in tRNAs that read codons beginning with uridine. This chain is tRNA-2-methylthio-N(6)-dimethylallyladenosine synthase, found in Bacillus cytotoxicus (strain DSM 22905 / CIP 110041 / 391-98 / NVH 391-98).